The sequence spans 150 residues: Macrodomain Ter protein (150 aa).

This sequence belongs to the MatP family. In terms of assembly, homodimer.

It is found in the cytoplasm. Required for spatial organization of the terminus region of the chromosome (Ter macrodomain) during the cell cycle. Prevents early segregation of duplicated Ter macrodomains during cell division. Binds specifically to matS, which is a 13 bp signature motif repeated within the Ter macrodomain. The sequence is that of Macrodomain Ter protein from Salmonella typhi.